The sequence spans 135 residues: Small ribosomal subunit protein uS12 (135 aa).

A 3-methylthioaspartic acid modification is found at D89. The tract at residues 103 to 135 (DTAGVKNRMQSRSKYGTKRPKPGQAAAPAGKKR) is disordered. Over residues 111-123 (MQSRSKYGTKRPK) the composition is skewed to basic residues. The span at 124–135 (PGQAAAPAGKKR) shows a compositional bias: low complexity.

The protein belongs to the universal ribosomal protein uS12 family. In terms of assembly, part of the 30S ribosomal subunit. Contacts proteins S8 and S17. May interact with IF1 in the 30S initiation complex.

With S4 and S5 plays an important role in translational accuracy. In terms of biological role, interacts with and stabilizes bases of the 16S rRNA that are involved in tRNA selection in the A site and with the mRNA backbone. Located at the interface of the 30S and 50S subunits, it traverses the body of the 30S subunit contacting proteins on the other side and probably holding the rRNA structure together. The combined cluster of proteins S8, S12 and S17 appears to hold together the shoulder and platform of the 30S subunit. This is Small ribosomal subunit protein uS12 from Gloeobacter violaceus (strain ATCC 29082 / PCC 7421).